Here is a 450-residue protein sequence, read N- to C-terminus: Alpha-2B adrenergic receptor (450 aa).

The Extracellular portion of the chain corresponds to 1–12; the sequence is MDHQDPYSVQAT. Residues 13–38 traverse the membrane as a helical segment; that stretch reads AAIAAAITFLILFTIFGNALVILAVL. Residues 39–48 lie on the Cytoplasmic side of the membrane; the sequence is TSRSLRAPQN. A helical membrane pass occupies residues 49 to 69; sequence LFLVSLAAADILVATLIIPFS. Topologically, residues 70 to 86 are extracellular; the sequence is LANELLGYWYFRRTWCE. Residues Cys-85 and Cys-164 are joined by a disulfide bond. Residues 87-107 form a helical membrane-spanning segment; that stretch reads VYLALDVLFCTSSIVHLCAIS. Topologically, residues 108 to 128 are cytoplasmic; the sequence is LDRYWAVSRALEYNSKRTPRR. The helical transmembrane segment at 129 to 149 threads the bilayer; the sequence is IKCIILTVWLIAAVISLPPLI. The Extracellular portion of the chain corresponds to 150-172; sequence YKGDQGPQPRGRPQCKLNQEAWY. The chain crosses the membrane as a helical span at residues 173-193; the sequence is ILASSIGSFFAPCLIMILVYL. Residues 194–368 are Cytoplasmic-facing; the sequence is RIYLIAKRSN…RRAQLTREKR (175 aa). 2 disordered regions span residues 204-229 and 241-329; these read RRGP…GGAL and ASAR…PLQQ. A compositionally biased stretch (basic and acidic residues) spans 246-256; that stretch reads VNGHSKSTGEK. A compositionally biased stretch (acidic residues) spans 293 to 311; the sequence is PEDEAEEEEEEEEEEEECE. The span at 312 to 326 shows a compositional bias: low complexity; it reads PQAVPVSPASACSPP. The chain crosses the membrane as a helical span at residues 369 to 389; it reads FTFVLAVVIGVFVLCWFPFFF. The Extracellular segment spans residues 390-405; the sequence is SYSLGAICPKHCKVPH. The chain crosses the membrane as a helical span at residues 406-426; the sequence is GLFQFFFWIGYCNSSLNPVIY. Residues 427 to 450 are Cytoplasmic-facing; the sequence is TIFNQDFRRAFRRILCRPWTQTAW. Cys-442 carries the S-palmitoyl cysteine lipid modification.

Belongs to the G-protein coupled receptor 1 family. Adrenergic receptor subfamily. ADRA2B sub-subfamily. Interacts with RAB26. Interacts with PPP1R9B. Interacts with GGA1, GGA2 and GGA3.

Its subcellular location is the cell membrane. In terms of biological role, alpha-2 adrenergic receptors mediate the catecholamine-induced inhibition of adenylate cyclase through the action of G proteins. The rank order of potency for agonists of this receptor is clonidine &gt; norepinephrine &gt; epinephrine = oxymetazoline &gt; dopamine &gt; p-tyramine = phenylephrine &gt; serotonin &gt; p-synephrine / p-octopamine. For antagonists, the rank order is yohimbine &gt; chlorpromazine &gt; phentolamine &gt; mianserine &gt; spiperone &gt; prazosin &gt; alprenolol &gt; propanolol &gt; pindolol. The sequence is that of Alpha-2B adrenergic receptor (ADRA2B) from Homo sapiens (Human).